A 547-amino-acid polypeptide reads, in one-letter code: Probable ABC transporter periplasmic-binding protein SapA (547 aa).

Positions 1 to 21 (MRQVLSSLLVIAGLVSGQAIA) are cleaved as a signal peptide.

Belongs to the bacterial solute-binding protein 5 family.

The protein resides in the periplasm. Functionally, not part of a putrescine export system. Very similar to a S.typhimurium protein implicated in antimicrobial peptide resistance, but the SapBCDF operon in E.coli is implicated in putrescine export. This is Probable ABC transporter periplasmic-binding protein SapA (sapA) from Escherichia coli (strain K12).